The sequence spans 360 residues: Ethanolamine-phosphate cytidylyltransferase (360 aa).

Residues 207–208 (GF), 215–218 (HTEA), lysine 243, 291–294 (HGDD), and 321–325 (HTEGL) each bind CTP.

The protein belongs to the cytidylyltransferase family.

It catalyses the reaction phosphoethanolamine + CTP + H(+) = CDP-ethanolamine + diphosphate. It participates in phospholipid metabolism; phosphatidylethanolamine biosynthesis; phosphatidylethanolamine from ethanolamine: step 2/3. Ethanolamine-phosphate cytidylyltransferase that catalyzes the second step in the synthesis of phosphatidylethanolamine (PE) from ethanolamine via the CDP-ethanolamine pathway. The chain is Ethanolamine-phosphate cytidylyltransferase (pctA) from Dictyostelium discoideum (Social amoeba).